A 202-amino-acid chain; its full sequence is Transmembrane protein 223 (202 aa).

The Mitochondrial matrix segment spans residues 1–43 (MAAPGRRWSVLLFRALQSLSARRALHDTAPPRDVLLFEHERGR). The chain crosses the membrane as a helical span at residues 44–64 (FFAVLGLFCAGQGVFWASLAI). The Mitochondrial intermembrane segment spans residues 65 to 97 (ASLARPPTPVRPTDAKTPDHGGLDLRSTLWRYG). A helical membrane pass occupies residues 98 to 118 (LAVGCGAIGSLVLGAGLLFSL). Residues 119–202 (RSVRSVMLRA…DNTVGAYRSL (84 aa)) are Mitochondrial matrix-facing.

Belongs to the TMEM223 family. Associates with the mitochondrial ribosome.

The protein localises to the mitochondrion inner membrane. Its function is as follows. Mitochondrial ribosome-associated protein involved in the first steps of cytochrome c oxidase complex (complex IV) biogenesis. Stimulates the translation of MT-CO1 mRNA and is a constituent of early MT-CO1 assembly intermediates. This Bos taurus (Bovine) protein is Transmembrane protein 223.